A 1888-amino-acid polypeptide reads, in one-letter code: Zinc finger protein 106 (1888 aa).

Residues 5 to 29 form a C2H2-type 1; atypical zinc finger; it reads RKCILCHIVYGSKKEMDEHMRSMLH. A C2H2-type 2; atypical zinc finger spans residues 43–67; it reads HECRVCRVTEVGLSAYAKHISGQLH. The segment at 68–187 is disordered; that stretch reads KDNVDAQERE…GPRGSSVWHK (120 aa). Acidic residues predominate over residues 75-89; sequence EREDDGKEEEEEEYF. Basic and acidic residues-rich tracts occupy residues 90–108, 118–138, and 150–160; these read DKELVQLIQERKEQSRQDE, SDDRQPQWRREDRIPYQDRES, and PQRDWKWEKDG. Lysine 91 participates in a covalent cross-link: Glycyl lysine isopeptide (Lys-Gly) (interchain with G-Cter in SUMO2). Residue lysine 155 forms a Glycyl lysine isopeptide (Lys-Gly) (interchain with G-Cter in SUMO2) linkage. Residues 161-175 show a composition bias toward polar residues; that stretch reads FNSTRKNSFPHSLRN. Residues lysine 265 and lysine 309 each participate in a glycyl lysine isopeptide (Lys-Gly) (interchain with G-Cter in SUMO2) cross-link. 2 disordered regions span residues 287–326 and 338–362; these read KKSNKPSKYSQERCKWQRQDRDKAAKYRSPPEGYASDTFP and RESQTTKQTDTAASKINGKNGTKAR. Positions 296–311 are enriched in basic and acidic residues; the sequence is SQERCKWQRQDRDKAA. Residues 342-357 show a composition bias toward polar residues; the sequence is TTKQTDTAASKINGKN. Residues lysine 375, lysine 384, lysine 390, lysine 435, lysine 469, and lysine 479 each participate in a glycyl lysine isopeptide (Lys-Gly) (interchain with G-Cter in SUMO2) cross-link. Disordered regions lie at residues 410-437 and 453-525; these read KPVDKTSNPPVIKTQKAGPPGSPSHKAI and TEQS…TSKS. A compositionally biased stretch (basic residues) spans 481–491; sequence GPHKQNLKNRS. Residues 507–525 show a composition bias toward polar residues; it reads LLNTSTLEGSHGSSYTSKS. Glycyl lysine isopeptide (Lys-Gly) (interchain with G-Cter in SUMO2) cross-links involve residues lysine 524, lysine 534, and lysine 544. The segment at 537–617 is disordered; the sequence is KTVSGTQKEP…SAMTSDAENH (81 aa). Residues 551 to 572 show a composition bias toward polar residues; the sequence is NNTSQKAQDTVLQCPKTLQNPL. Lysine 577 is covalently cross-linked (Glycyl lysine isopeptide (Lys-Gly) (interchain with G-Cter in SUMO2)). The span at 577–593 shows a compositional bias: basic and acidic residues; it reads KRMENDAKESSVEESAK. Positions 597–613 are enriched in polar residues; the sequence is SIESQPHSAGNSAMTSD. Residue lysine 620 forms a Glycyl lysine isopeptide (Lys-Gly) (interchain with G-Cter in SUMO2) linkage. The interval 635–661 is disordered; the sequence is STHTVDKEQGSQIPGTPENLSTSPRNS. The segment covering 644-661 has biased composition (polar residues); sequence GSQIPGTPENLSTSPRNS. Phosphoserine occurs at positions 657 and 677. Residues lysine 687, lysine 700, lysine 721, lysine 738, lysine 758, lysine 792, and lysine 824 each participate in a glycyl lysine isopeptide (Lys-Gly) (interchain with G-Cter in SUMO2) cross-link. The interval 696–728 is disordered; the sequence is NNLVKSDGPFETESFEDTSLDTELQKPDLNNQP. Serine 876, serine 878, serine 881, and serine 909 each carry phosphoserine. The tract at residues 894–920 is disordered; that stretch reads TGEGTGKENEAQQSPSPNTALSAAQSQ. A compositionally biased stretch (polar residues) spans 904–920; that stretch reads AQQSPSPNTALSAAQSQ. Lysine 921 is covalently cross-linked (Glycyl lysine isopeptide (Lys-Gly) (interchain with G-Cter in SUMO2)). Serine 953 carries the post-translational modification Phosphoserine. A compositionally biased stretch (basic and acidic residues) spans 968–986; that stretch reads ARDLHSQERSTPLSERHAQ. 3 disordered regions span residues 968-1064, 1281-1461, and 1468-1487; these read ARDL…ERSQ, EQGN…SKKD, and QNPIETSRSGCDEVSSTSEL. A compositionally biased stretch (low complexity) spans 992–1008; the sequence is GNSLSSNASSGHAVSSL. Positions 1013-1022 are enriched in polar residues; sequence TDSSCTSGAE. Threonine 1036 carries the post-translational modification Phosphothreonine. Phosphoserine occurs at positions 1040, 1041, and 1046. Residues 1050-1060 are compositionally biased toward basic residues; the sequence is KNKRRKIKGKK. Residues 1281 to 1296 show a composition bias toward polar residues; the sequence is EQGNSRSKGNSPSCQS. Phosphoserine occurs at positions 1291, 1293, and 1296. Lysine 1310 participates in a covalent cross-link: Glycyl lysine isopeptide (Lys-Gly) (interchain with G-Cter in SUMO2). Residues 1312–1321 are compositionally biased toward low complexity; sequence SSGSEACSSS. Residue serine 1313 is modified to Phosphoserine. Lysine 1335 participates in a covalent cross-link: Glycyl lysine isopeptide (Lys-Gly) (interchain with G-Cter in SUMO2). The segment covering 1338–1354 has biased composition (polar residues); that stretch reads QSPADQPEQQAESTLAS. At serine 1339 the chain carries Phosphoserine. The segment covering 1360 to 1373 has biased composition (basic residues); that stretch reads SKKKKKLRKKKTLR. A Phosphoserine modification is found at serine 1381. Threonine 1383 is modified (phosphothreonine). Residues lysine 1391, lysine 1403, lysine 1406, and lysine 1460 each participate in a glycyl lysine isopeptide (Lys-Gly) (interchain with G-Cter in SUMO2) cross-link. The span at 1450 to 1461 shows a compositional bias: basic and acidic residues; the sequence is GDEKPDSPSKKD. Polar residues predominate over residues 1470-1487; the sequence is PIETSRSGCDEVSSTSEL. Phosphoserine is present on serine 1474. Glycyl lysine isopeptide (Lys-Gly) (interchain with G-Cter in SUMO2) cross-links involve residues lysine 1492 and lysine 1509. Residues 1509-1531 form a disordered region; it reads KASKHSSEISSEPGDDEEPTEGS. WD repeat units lie at residues 1534 to 1573, 1575 to 1618, 1659 to 1700, 1703 to 1742, 1743 to 1780, and 1783 to 1820; these read GHQAAVNAIQIFGNFLYTCSADTTVRVYNLVSRKCVGVFE, HTSK…EQLQ, HGPR…LLRT, GHSKTVLCMKVVNDLVFSGSSDQSVHAHNIHTGELVRIYK, GHNHAVTVVNILGKVMVTACLDKFVRVYELQSHDRLQV, and GHKDMIMCMTIHKSVIYTGCYDGSIQAVRLNLMQNYRC. Lysine 1590 participates in a covalent cross-link: Glycyl lysine isopeptide (Lys-Gly) (interchain with G-Cter in SUMO2). Residue lysine 1742 forms a Glycyl lysine isopeptide (Lys-Gly) (interchain with G-Cter in SUMO2) linkage. The C2H2-type 3; atypical zinc finger occupies 1818 to 1843; it reads YRCWWYGCTLIFGVVDHLKQHLLTDH. A Glycyl lysine isopeptide (Lys-Gly) (interchain with G-Cter in SUMO2) cross-link involves residue lysine 1869.

As to quaternary structure, interacts with KNOP1. Interacts with TARDBP and NUP107. Interacts (via N-terminus) with RBM39. Interacts with the SH3 domains of FYN and GRB2. Post-translationally, phosphorylated by FYN in vitro. In terms of tissue distribution, widely expressed, with strongest expression in skeletal muscle, heart and brain (at protein level). Detected in spinal cord motor neurons.

It is found in the nucleus. The protein localises to the nucleolus. The protein resides in the nucleus speckle. RNA-binding protein. Specifically binds to 5'-GGGGCC-3' sequence repeats in RNA. Essential for maintenance of peripheral motor neuron and skeletal muscle function. Required for normal expression and/or alternative splicing of a number of genes in spinal cord and skeletal muscle, including the neurite outgrowth inhibitor RTN4. Also contributes to normal mitochondrial respiratory function in motor neurons, via an unknown mechanism. In Mus musculus (Mouse), this protein is Zinc finger protein 106 (Znf106).